The following is a 512-amino-acid chain: Glutamate--tRNA ligase (512 aa).

The 'HIGH' region signature appears at 11–21; it reads PSPTGALHIGG. A 'KMSKS' region motif is present at residues 263–267; sequence KLSKR. Residue lysine 266 participates in ATP binding.

The protein belongs to the class-I aminoacyl-tRNA synthetase family. Glutamate--tRNA ligase type 1 subfamily. In terms of assembly, monomer.

It localises to the cytoplasm. It catalyses the reaction tRNA(Glu) + L-glutamate + ATP = L-glutamyl-tRNA(Glu) + AMP + diphosphate. Functionally, catalyzes the attachment of glutamate to tRNA(Glu) in a two-step reaction: glutamate is first activated by ATP to form Glu-AMP and then transferred to the acceptor end of tRNA(Glu). The protein is Glutamate--tRNA ligase of Amoebophilus asiaticus (strain 5a2).